The primary structure comprises 481 residues: Trigger factor (481 aa).

The PPIase FKBP-type domain occupies 161-298 (GDQLTATVQT…VSEIQNRQLP (138 aa)). The disordered stretch occupies residues 173-245 (DGVPLHKLDE…PTTLIMEERR (73 aa)). Residues 182–235 (EEDDDDDDDDDDDDDDDDDDDDDDDDDDDDDDDDDDDDDDDDDDDDDDDDDEGE) show a composition bias toward acidic residues.

Belongs to the FKBP-type PPIase family. Tig subfamily.

Its subcellular location is the cytoplasm. It catalyses the reaction [protein]-peptidylproline (omega=180) = [protein]-peptidylproline (omega=0). Involved in protein export. Acts as a chaperone by maintaining the newly synthesized protein in an open conformation. Functions as a peptidyl-prolyl cis-trans isomerase. This is Trigger factor from Herpetosiphon aurantiacus (strain ATCC 23779 / DSM 785 / 114-95).